The chain runs to 665 residues: Alpha-1,4-glucan:maltose-1-phosphate maltosyltransferase (665 aa).

Alpha-maltose 1-phosphate-binding residues include Lys255, Gln315, and Asp350. Residue Asp386 is the Nucleophile of the active site. An alpha-maltose 1-phosphate-binding site is contributed by Asn387. Glu415 acts as the Proton donor in catalysis. Residue 526-527 (KY) coordinates alpha-maltose 1-phosphate.

This sequence belongs to the glycosyl hydrolase 13 family. GlgE subfamily. As to quaternary structure, homodimer.

The catalysed reaction is alpha-maltose 1-phosphate + [(1-&gt;4)-alpha-D-glucosyl](n) = [(1-&gt;4)-alpha-D-glucosyl](n+2) + phosphate. Maltosyltransferase that uses maltose 1-phosphate (M1P) as the sugar donor to elongate linear or branched alpha-(1-&gt;4)-glucans. Is involved in a branched alpha-glucan biosynthetic pathway from trehalose, together with TreS, Mak and GlgB. The sequence is that of Alpha-1,4-glucan:maltose-1-phosphate maltosyltransferase from Myxococcus xanthus (strain DK1622).